We begin with the raw amino-acid sequence, 138 residues long: Large ribosomal subunit protein uL29 (138 aa).

The large ribosomal subunit protein uL29 stretch occupies residues 1 to 79; that stretch reads MAKSKMLDLR…TNKVIKADYN (79 aa). Residues 80-138 form a unknown region; it reads KAVEEAEKAGKEVRAKQRKFLEEQYGQQSQTKVNEADIQKAMQAAEQETVEPDTKGETK. Positions 103-138 are disordered; the sequence is QYGQQSQTKVNEADIQKAMQAAEQETVEPDTKGETK.

This sequence belongs to the universal ribosomal protein uL29 family.

The chain is Large ribosomal subunit protein uL29 from Mycoplasma capricolum subsp. capricolum (strain California kid / ATCC 27343 / NCTC 10154).